The sequence spans 77 residues: Putative ankyrin repeat protein RC0956 (77 aa).

An ANK repeat occupies 8-38; that stretch reads TDISPLMLASEYGQVTIVKYLLKHGNYNVKG.

The polypeptide is Putative ankyrin repeat protein RC0956 (Rickettsia conorii (strain ATCC VR-613 / Malish 7)).